The chain runs to 179 residues: Large ribosomal subunit protein uL5 (179 aa).

This sequence belongs to the universal ribosomal protein uL5 family. As to quaternary structure, part of the 50S ribosomal subunit; part of the 5S rRNA/L5/L18/L25 subcomplex. Contacts the 5S rRNA and the P site tRNA. Forms a bridge to the 30S subunit in the 70S ribosome.

This is one of the proteins that bind and probably mediate the attachment of the 5S RNA into the large ribosomal subunit, where it forms part of the central protuberance. In the 70S ribosome it contacts protein S13 of the 30S subunit (bridge B1b), connecting the 2 subunits; this bridge is implicated in subunit movement. Contacts the P site tRNA; the 5S rRNA and some of its associated proteins might help stabilize positioning of ribosome-bound tRNAs. The polypeptide is Large ribosomal subunit protein uL5 (Shouchella clausii (strain KSM-K16) (Alkalihalobacillus clausii)).